The primary structure comprises 142 residues: Hydrogenase maturation factor HypA (142 aa).

A Ni(2+)-binding site is contributed by H2. C73, C76, C109, and C112 together coordinate Zn(2+).

This sequence belongs to the HypA/HybF family.

Its function is as follows. Involved in the maturation of [NiFe] hydrogenases. Required for nickel insertion into the metal center of the hydrogenase. This is Hydrogenase maturation factor HypA from Methanopyrus kandleri (strain AV19 / DSM 6324 / JCM 9639 / NBRC 100938).